A 360-amino-acid polypeptide reads, in one-letter code: Phospho-N-acetylmuramoyl-pentapeptide-transferase (360 aa).

Transmembrane regions (helical) follow at residues 27-47, 73-93, 94-114, 132-152, 168-188, 199-219, 236-256, 263-283, 288-308, and 338-358; these read IVSL…MIAW, TMGG…WANL, SNPY…VGFV, WKYF…YSIG, VMPQ…VGTS, GLAI…AWAT, ASEL…FLWF, VFMG…IAVL, FLLV…ILQV, and VIVR…ATLK.

It belongs to the glycosyltransferase 4 family. MraY subfamily. It depends on Mg(2+) as a cofactor.

It localises to the cell inner membrane. It carries out the reaction UDP-N-acetyl-alpha-D-muramoyl-L-alanyl-gamma-D-glutamyl-meso-2,6-diaminopimeloyl-D-alanyl-D-alanine + di-trans,octa-cis-undecaprenyl phosphate = di-trans,octa-cis-undecaprenyl diphospho-N-acetyl-alpha-D-muramoyl-L-alanyl-D-glutamyl-meso-2,6-diaminopimeloyl-D-alanyl-D-alanine + UMP. Its pathway is cell wall biogenesis; peptidoglycan biosynthesis. Its function is as follows. Catalyzes the initial step of the lipid cycle reactions in the biosynthesis of the cell wall peptidoglycan: transfers peptidoglycan precursor phospho-MurNAc-pentapeptide from UDP-MurNAc-pentapeptide onto the lipid carrier undecaprenyl phosphate, yielding undecaprenyl-pyrophosphoryl-MurNAc-pentapeptide, known as lipid I. The chain is Phospho-N-acetylmuramoyl-pentapeptide-transferase from Pectobacterium atrosepticum (strain SCRI 1043 / ATCC BAA-672) (Erwinia carotovora subsp. atroseptica).